Consider the following 1081-residue polypeptide: Carbamoyl phosphate synthase large chain (1081 aa).

The tract at residues 1–403 (MPRRNDLNKI…SFQKALRSLE (403 aa)) is carboxyphosphate synthetic domain. ATP-binding residues include arginine 129, arginine 170, glycine 177, lysine 209, leucine 211, glutamate 216, glycine 242, valine 243, histidine 244, glutamine 286, and glutamate 300. An ATP-grasp 1 domain is found at 133–329 (KEAMARIGVP…IAKFAAKLAV (197 aa)). Mg(2+) contacts are provided by glutamine 286, glutamate 300, and asparagine 302. Mn(2+)-binding residues include glutamine 286, glutamate 300, and asparagine 302. An oligomerization domain region spans residues 404–553 (TGRFGFGCDR…STYEPEECEV (150 aa)). A carbamoyl phosphate synthetic domain region spans residues 554 to 944 (LPSDKPKVMI…AFAKAELGAG (391 aa)). The region spanning 686 to 878 (EKILHELEIS…LAKIASLVMS (193 aa)) is the ATP-grasp 2 domain. The ATP site is built by arginine 722, lysine 761, leucine 763, glutamate 768, glycine 794, isoleucine 795, histidine 796, serine 797, glutamine 837, and glutamate 849. Glutamine 837, glutamate 849, and asparagine 851 together coordinate Mg(2+). Positions 837, 849, and 851 each coordinate Mn(2+). One can recognise an MGS-like domain in the interval 945 to 1081 (VILATTGTVF…DVKALQDYLG (137 aa)). Residues 945–1081 (VILATTGTVF…DVKALQDYLG (137 aa)) form an allosteric domain region.

The protein belongs to the CarB family. As to quaternary structure, composed of two chains; the small (or glutamine) chain promotes the hydrolysis of glutamine to ammonia, which is used by the large (or ammonia) chain to synthesize carbamoyl phosphate. Tetramer of heterodimers (alpha,beta)4. Requires Mg(2+) as cofactor. Mn(2+) serves as cofactor.

The enzyme catalyses hydrogencarbonate + L-glutamine + 2 ATP + H2O = carbamoyl phosphate + L-glutamate + 2 ADP + phosphate + 2 H(+). The catalysed reaction is hydrogencarbonate + NH4(+) + 2 ATP = carbamoyl phosphate + 2 ADP + phosphate + 2 H(+). The protein operates within amino-acid biosynthesis; L-arginine biosynthesis; carbamoyl phosphate from bicarbonate: step 1/1. It functions in the pathway pyrimidine metabolism; UMP biosynthesis via de novo pathway; (S)-dihydroorotate from bicarbonate: step 1/3. Functionally, large subunit of the glutamine-dependent carbamoyl phosphate synthetase (CPSase). CPSase catalyzes the formation of carbamoyl phosphate from the ammonia moiety of glutamine, carbonate, and phosphate donated by ATP, constituting the first step of 2 biosynthetic pathways, one leading to arginine and/or urea and the other to pyrimidine nucleotides. The large subunit (synthetase) binds the substrates ammonia (free or transferred from glutamine from the small subunit), hydrogencarbonate and ATP and carries out an ATP-coupled ligase reaction, activating hydrogencarbonate by forming carboxy phosphate which reacts with ammonia to form carbamoyl phosphate. The polypeptide is Carbamoyl phosphate synthase large chain (Synechocystis sp. (strain ATCC 27184 / PCC 6803 / Kazusa)).